Consider the following 552-residue polypeptide: Polypeptide N-acetylgalactosaminyltransferase 14 (552 aa).

Residues 1–6 (MRRLTR) are Cytoplasmic-facing. Residues 7–26 (RLVLPVFGVLWITVLLFFWV) traverse the membrane as a helical; Signal-anchor for type II membrane protein segment. At 27–552 (TKRKLEVPTG…MSQHWDMVSS (526 aa)) the chain is on the lumenal side. 5 disulfides stabilise this stretch: Cys101/Cys328, Cys319/Cys397, Cys430/Cys449, Cys476/Cys493, and Cys517/Cys538. Positions 110–215 (LPPTSIIITF…RDWLQPLLHR (106 aa)) are catalytic subdomain A. Substrate is bound by residues Asp151 and Arg176. Residue Asp199 coordinates Mn(2+). Ser200 contributes to the substrate binding site. Position 201 (His201) interacts with Mn(2+). A catalytic subdomain B region spans residues 274–336 (PIRTPIIAGG…PCSRVGHVFR (63 aa)). Trp305 serves as a coordination point for substrate. His333 is a binding site for Mn(2+). 3 residues coordinate substrate: Arg336, His339, and Tyr341. The region spanning 415–550 (KESSIQKGNI…SLMSQHWDMV (136 aa)) is the Ricin B-type lectin domain.

Belongs to the glycosyltransferase 2 family. GalNAc-T subfamily. Mn(2+) is required as a cofactor. Detected in renal tubules (at protein level). Highly expressed in fetal and adult kidney. Widely expressed at low level. Weakly expressed in whole brain, cerebellum, thymus, lung, mammary gland, liver, stomach, small intestine, colon, pancreas, spleen, bladder, uterus, placenta, testis, ovary, skeletal muscle, leukocyte, B-cell, bone marrow, fetal brain, fetal thymus, fetal lung, fetal liver, fetal small intestine, fetal spleen, fetal skeletal and fetus. Detected in renal tubules (at protein level).

The protein resides in the golgi apparatus membrane. The enzyme catalyses L-seryl-[protein] + UDP-N-acetyl-alpha-D-galactosamine = a 3-O-[N-acetyl-alpha-D-galactosaminyl]-L-seryl-[protein] + UDP + H(+). It carries out the reaction L-threonyl-[protein] + UDP-N-acetyl-alpha-D-galactosamine = a 3-O-[N-acetyl-alpha-D-galactosaminyl]-L-threonyl-[protein] + UDP + H(+). It participates in protein modification; protein glycosylation. Its function is as follows. Catalyzes the initial reaction in O-linked oligosaccharide biosynthesis, the transfer of an N-acetyl-D-galactosamine residue to a serine or threonine residue on the protein receptor. Displays activity toward mucin-derived peptide substrates such as Muc2, Muc5AC, Muc7, and Muc13 (-58). May be involved in O-glycosylation in kidney. This is Polypeptide N-acetylgalactosaminyltransferase 14 (GALNT14) from Homo sapiens (Human).